Reading from the N-terminus, the 395-residue chain is Vascular endothelial growth factor A, long form (395 aa).

2 disordered regions span residues 1–45 (MTDR…VEGV) and 73–175 (EAEP…AGPG). Low complexity predominate over residues 73–85 (EAEPSGAARSASS). A compositionally biased stretch (acidic residues) spans 91-102 (QPEEGEEEEEKE). Composition is skewed to low complexity over residues 123 to 143 (AAVC…ARAS) and 165 to 175 (RRGSASRAGPG). Disulfide bonds link C232–C274, C263–C308, and C267–C310. N281 carries an N-linked (GlcNAc...) asparagine glycan. The span at 314 to 323 (KDRARQEKKS) shows a compositional bias: basic and acidic residues. Residues 314 to 344 (KDRARQEKKSVRGKGKGQKRKRKKSRYKSWS) are disordered. Positions 324–340 (VRGKGKGQKRKRKKSRY) are enriched in basic residues.

Belongs to the PDGF/VEGF growth factor family. As to quaternary structure, homodimer; disulfide-linked. Also found as heterodimer with PGF. Interacts with NRP1. Interacts with isoform 2 of BSG. Interacts with CD82; this interaction inhibits VEGFA-mediated signaling pathway. In terms of processing, produced by use of an alternative upstream CUG codon and post-translationally processed into the N-terminal N-VEGF form and the C-terminal secreted VEGFA form. As to expression, higher expression in pituitary tumors than the pituitary gland. Widely expressed. In terms of tissue distribution, not widely expressed.

The protein resides in the cytoplasm. It localises to the nucleus. It is found in the secreted. Its subcellular location is the endoplasmic reticulum. The protein localises to the golgi apparatus. The protein resides in the extracellular space. It localises to the extracellular matrix. In terms of biological role, participates in the induction of key genes involved in the response to hypoxia and in the induction of angiogenesis such as HIF1A. Involved in protecting cells from hypoxia-mediated cell death. Its function is as follows. Growth factor active in angiogenesis, vasculogenesis and endothelial cell growth. Induces endothelial cell proliferation, promotes cell migration, inhibits apoptosis and induces permeabilization of blood vessels. Binds to the FLT1/VEGFR1 and KDR/VEGFR2 receptors, heparan sulfate and heparin. Binds to the NRP1/neuropilin-1 receptor. Binding to NRP1 initiates a signaling pathway needed for motor neuron axon guidance and cell body migration, including for the caudal migration of facial motor neurons from rhombomere 4 to rhombomere 6 during embryonic development. Also binds the DEAR/FBXW7-AS1 receptor. Functionally, binds to the KDR receptor but does not activate downstream signaling pathways, does not activate angiogenesis and inhibits tumor growth. This chain is Vascular endothelial growth factor A, long form (VEGFA), found in Homo sapiens (Human).